The sequence spans 1234 residues: DNA-directed RNA polymerase subunit beta (1234 aa).

The disordered stretch occupies residues 1189–1212 (VLSSQDNDYEEPEENDEEDELNLD). The span at 1195–1212 (NDYEEPEENDEEDELNLD) shows a compositional bias: acidic residues.

The protein belongs to the RNA polymerase beta chain family. As to quaternary structure, the RNAP catalytic core consists of 2 alpha, 1 beta, 1 beta' and 1 omega subunit. When a sigma factor is associated with the core the holoenzyme is formed, which can initiate transcription.

It carries out the reaction RNA(n) + a ribonucleoside 5'-triphosphate = RNA(n+1) + diphosphate. Its function is as follows. DNA-dependent RNA polymerase catalyzes the transcription of DNA into RNA using the four ribonucleoside triphosphates as substrates. The protein is DNA-directed RNA polymerase subunit beta of Clostridium kluyveri (strain NBRC 12016).